A 255-amino-acid polypeptide reads, in one-letter code: Triosephosphate isomerase (255 aa).

10–12 lines the substrate pocket; the sequence is NWK. H96 functions as the Electrophile in the catalytic mechanism. E168 (proton acceptor) is an active-site residue. Substrate is bound by residues G174, S213, and 234–235; that span reads GG.

The protein belongs to the triosephosphate isomerase family. In terms of assembly, homodimer.

The protein localises to the cytoplasm. It catalyses the reaction D-glyceraldehyde 3-phosphate = dihydroxyacetone phosphate. The protein operates within carbohydrate biosynthesis; gluconeogenesis. It functions in the pathway carbohydrate degradation; glycolysis; D-glyceraldehyde 3-phosphate from glycerone phosphate: step 1/1. Functionally, involved in the gluconeogenesis. Catalyzes stereospecifically the conversion of dihydroxyacetone phosphate (DHAP) to D-glyceraldehyde-3-phosphate (G3P). The polypeptide is Triosephosphate isomerase (Histophilus somni (strain 129Pt) (Haemophilus somnus)).